The sequence spans 416 residues: MPNGSRCPDCGSSELVEDSHYSQSQLVCSDCGCVVTEGVLTTTFSDEGNLREVTYSRSTGENEQVSRSQQRDLRRVRDLCRILKLPLTFEETAVSYYQKAYQLSGIRAARLQKKEVVVGCCVLITCRQHNWPLTMGAICTLLYADLDVFSSTYMQIVKLLGLDVPSLCLADLVKSYCSSFKLFQASPSMPAKYVEDKDKMLSRTLLLVELANETWLVTGRHPLPIITAATFLAWQSLRPSDRLTCSLARFCKLANVDLPYPAASRLQELLAVLLQMASQLAWLQVLRLDKRSVVKHIGDLLQHRHMLVRMAFQDGTAEVETKQQQPQGRGQQEEVGDSTFDLPKRKRPASPALLLPPCMLKPPKRTHTMPPDSVVTGDEDISDSEIEQYLRTPQEVRDFERAQAASRAAMSVPNPP.

A TFIIB-type zinc finger spans residues 3–36 (NGSRCPDCGSSELVEDSHYSQSQLVCSDCGCVVT). Zn(2+)-binding residues include C7, C10, C28, and C31. 2 tandem repeats follow at residues 72–157 (DLRR…MQIV) and 173–249 (VKSY…SLAR). Positions 108-114 (AARLQKK) are interaction with target DNA. The interval 317–385 (AEVETKQQQP…TGDEDISDSE (69 aa)) is disordered. Phosphoserine is present on S350. Residues 354–360 (LLPPCML) are required for the formation of a ternary complex with DNA and TBP; not required for interaction with TBP in the absence of DNA. C358 is subject to Cysteine sulfenic acid (-SOH). The interval 362 to 416 (PPKRTHTMPPDSVVTGDEDISDSEIEQYLRTPQEVRDFERAQAASRAAMSVPNPP) is required for interaction with TBP and formation of a ternary complex with DNA and TBP.

It belongs to the TFIIB family. Component of TFIIIB complexes. The TFIIIB complex has two activities, alpha and beta. The TFIIIB-alpha activity complex is composed of TBP, BDP1, and a complex containing both BRF2 and at least four stably associated proteins; this complex inhibits the transcription by pol III via its phosphorylation by CK2; YY1 facilitates the TFIIIB-alpha complex formation. Interacts with TBP; this interaction promotes recruitment of BRF2 to TATA box-containing promoters. Interacts with TBP and the BURE sequence (GC-rich sequence downstream from the TATA box) to form a strong ternary complex which is joined by BDP1; this ternary complex stimulates pol III transcription. Forms a trimeric complex composed of TBP, BRF2 and mini-SNAPc complex (SNAP43, SNAP50, and the N-terminal third of SNAP190) on the promoter. Assembly of the TBP-BRF2 complex is stimulated by SNAP190. Interacts with MAF1 and SNAPC4. In terms of processing, in response to oxidative stress, Cys-358 is reversibly oxidized to cysteine sulfenic acid. Oxidation of Cys-358 impairs formation of a ternary complex with TBP and DNA and down-regulates expression of target genes in response to oxidative stress.

The protein localises to the nucleus. Its function is as follows. General activator of RNA polymerase III transcription. Factor exclusively required for RNA polymerase III transcription of genes with promoter elements upstream of the initiation sites. Contributes to the regulation of gene expression; functions as activator in the absence of oxidative stress. Down-regulates expression of target genes in response to oxidative stress. Overexpression protects cells against apoptosis in response to oxidative stress. The polypeptide is Transcription factor IIIB 50 kDa subunit (Brf2) (Rattus norvegicus (Rat)).